Consider the following 5255-residue polypeptide: SCO-spondin (5255 aa).

A signal peptide spans 1-18; it reads MGIVATVLLWVVTEAARG. The region spanning 19 to 111 is the EMI domain; the sequence is RWCERTEQVT…ACCAGWSGPH (93 aa). Residues Asn-97, Asn-136, Asn-156, and Asn-255 are each glycosylated (N-linked (GlcNAc...) asparagine). The VWFD 1 domain maps to 192–358; that stretch reads ASCTVWAGSR…PDANPELSCS (167 aa). Intrachain disulfides connect Cys-194/Cys-317 and Cys-216/Cys-357. The 56-residue stretch at 453-508 folds into the TIL 1 domain; it reads CGHGQRYSDCVSSCPASCMAAGTAEEGHCRDDCASGCECTPGLLLDRGACIPQSAC. The VWFC 1 domain occupies 508 to 601; it reads CPCLHRGHIY…CGGHQPLSCL (94 aa). Positions 546–717 constitute a VWFD 2 domain; the sequence is AECAVLGDLH…NKYRVSTDCP (172 aa). Intrachain disulfides connect Cys-548-Cys-681, Cys-570-Cys-716, and Cys-592-Cys-600. A glycan (N-linked (GlcNAc...) asparagine) is linked at Asn-801. Positions 809-868 constitute a TIL 2 domain; sequence CRGGQVYQECSSPCGRTCADLRLDGASSCPSLDNICVSGCNCPEGPVLDDGGQCVPPGVC. In terms of domain architecture, VWFC 2 spans 868 to 926; sequence CPCQHSSQLYPAGSKIRQGCNACMCTAGTWSCTDAPCPDAAFCPGDLVYVFGSCLRTCD. 2 N-linked (GlcNAc...) asparagine glycosylation sites follow: Asn-931 and Asn-972. A VWFD 3 domain is found at 998 to 1168; the sequence is GTCVATGDPH…NSWRVSLLCP (171 aa). Cystine bridges form between Cys-1000–Cys-1132, Cys-1022–Cys-1167, and Cys-1043–Cys-1050. A TIL 3 domain is found at 1263-1319; that stretch reads CDGGQEYSACGPPCPQTCRNLGLELPEHCDTMSCLEGCFCPEGKVLHEGSCIDPAEC. The N-linked (GlcNAc...) asparagine glycan is linked to Asn-1340. 6 LDL-receptor class A domains span residues 1362 to 1398, 1400 to 1436, 1439 to 1477, 1479 to 1515, 1515 to 1551, and 1555 to 1593; these read HCPDSEFPCRSGGRCVPGAWLCDNEDDCGDGSDEVCA, HCAPHQHRCADGQCVPWGARCDGLSDCGDGSDERGCP, PCAPPEFRCASGRCIPRAHVCNGELDCGFADDSDEAGCS, SCSVGEFQCAAGRCVPYPHRCNGHDDCGDFSDERGCV, VCPAGHFQCPDAQCLPPAALCDGMQDCGDGTDEAFCP, and TCAPGQLPCPDGSCVSQVKLCDGIWDCRDGWDESSVRCM. Cystine bridges form between Cys-1363–Cys-1376, Cys-1370–Cys-1389, Cys-1383–Cys-1397, Cys-1401–Cys-1413, Cys-1408–Cys-1426, Cys-1420–Cys-1435, Cys-1440–Cys-1452, Cys-1447–Cys-1465, Cys-1459–Cys-1476, Cys-1480–Cys-1492, Cys-1487–Cys-1505, Cys-1499–Cys-1514, Cys-1516–Cys-1528, Cys-1523–Cys-1541, Cys-1535–Cys-1550, Cys-1556–Cys-1568, Cys-1563–Cys-1581, and Cys-1575–Cys-1592. A glycan (N-linked (GlcNAc...) asparagine) is linked at Asn-1610. 3 consecutive LDL-receptor class A domains span residues 1616-1652, 1654-1693, and 1699-1734; these read VCGPYEFPCRSGQCVPRGWVCDSEADCPDNSDELGCN, SCVLGHFPCALGAHCIHYDHLCDGIPHCPDHSDESDDNCG, and PCPGHFVCNNRVCVNATRVCDGALDCPQGEDELACE. Intrachain disulfides connect Cys-1617–Cys-1629, Cys-1624–Cys-1642, and Cys-1636–Cys-1651. The N-linked (GlcNAc...) asparagine glycan is linked to Asn-1652. 6 disulfide bridges follow: Cys-1655-Cys-1668, Cys-1662-Cys-1681, Cys-1675-Cys-1692, Cys-1700-Cys-1711, Cys-1706-Cys-1724, and Cys-1718-Cys-1733. Residue Asn-1713 is glycosylated (N-linked (GlcNAc...) asparagine). Asn-1743 carries N-linked (GlcNAc...) asparagine glycosylation. Residues 1748-1790 form the LDL-receptor class A 10 domain; sequence PCAEYSCRDGDCITFKQVCNGLPDCRDGDMASGWLPSDEWDCG. 6 disulfide bridges follow: Cys-1749-Cys-1759, Cys-1754-Cys-1772, Cys-1766-Cys-1789, Cys-1801-Cys-1837, Cys-1805-Cys-1842, and Cys-1816-Cys-1827. TSP type-1 domains lie at 1789–1843 and 1845–1903; these read CGQW…TACP and DGAW…DGCP. Asn-1856 carries N-linked (GlcNAc...) asparagine glycosylation. 3 disulfide bridges follow: Cys-1857/Cys-1897, Cys-1861/Cys-1902, and Cys-1871/Cys-1881. Residues 1907 to 1961 enclose the TIL 4 domain; that stretch reads CPGGLQPRPCAPCPASCADLASRAPCRREQCTPGCWCAEGLVLDGERGCVRPREC. 2 consecutive EGF-like domains span residues 1919–1956 and 1957–1983; these read CPASCADLASRAPCRREQCTPGCWCAEGLVLDGERGCV and RPRECRCEVDGLRYWPGQRMKLNCRLC. Residues 1961 to 2019 form the VWFC 3 domain; the sequence is CRCEVDGLRYWPGQRMKLNCRLCTCLDGQPRRCRHNPACSVSCSWSAWSPWGECLGPCG. The 57-residue stretch at 2002-2058 folds into the TSP type-1 3 domain; that stretch reads SCSWSAWSPWGECLGPCGVQSIQWSFRSPSHPGKHGTNRQCRGIYRKARRCQTEPCQ. 3 disulfides stabilise this stretch: Cys-2003–Cys-2042, Cys-2014–Cys-2018, and Cys-2052–Cys-2057. One can recognise a VWFC 4 domain in the interval 2058–2120; sequence QECEHQGRSR…GKGDSCCFCA (63 aa). Residues Asn-2125 and Asn-2230 are each glycosylated (N-linked (GlcNAc...) asparagine). Disulfide bonds link Cys-2162/Cys-2310, Cys-2328/Cys-2339, Cys-2335/Cys-2352, and Cys-2346/Cys-2361. The F5/8 type C domain occupies 2162 to 2310; sequence CYSPLGIASL…IFLRAELLGC (149 aa). An LDL-receptor class A 11 domain is found at 2327–2362; sequence PCGTGEFWCGVSCVTASRRCDGATDCPGGADEAGCE. Positions 2352 to 2373 are disordered; the sequence is CPGGADEAGCEPPSSTTLPTHP. Over residues 2364–2373 the composition is skewed to polar residues; sequence PSSTTLPTHP. LDL-receptor class A domains follow at residues 2481–2517 and 2538–2574; these read LCPPDQFLCDALGCVDAAMVCDGQQDCLDGSDEAHCG and TCSPKQFSCGTGECLALEKRCDLSRDCADGSDESSCA. Disulfide bonds link Cys-2482–Cys-2494, Cys-2489–Cys-2507, Cys-2501–Cys-2516, Cys-2539–Cys-2551, Cys-2546–Cys-2564, Cys-2558–Cys-2573, Cys-2576–Cys-2612, Cys-2587–Cys-2591, Cys-2622–Cys-2627, Cys-2642–Cys-2679, Cys-2646–Cys-2684, and Cys-2657–Cys-2669. 2 consecutive TSP type-1 domains span residues 2575–2628 and 2630–2685; these read DCIL…RACP and PGAW…QPCG. The TIL 5 domain occupies 2708 to 2750; the sequence is PPCPQVCGDLSATSSCQSPCQEGCRCPPGLFLQEGTCVNASQC. N-linked (GlcNAc...) asparagine glycosylation occurs at Asn-2746. TSP type-1 domains lie at 2790 to 2844, 2849 to 2903, and 2905 to 2958; these read ACAW…TPCA, SSGW…APCP, and AGVW…RPCG. Cystine bridges form between Cys-2791–Cys-2829, Cys-2802–Cys-2806, Cys-2839–Cys-2843, Cys-2861–Cys-2897, Cys-2865–Cys-2902, Cys-2881–Cys-2887, Cys-2917–Cys-2952, Cys-2921–Cys-2957, and Cys-2932–Cys-2942. One can recognise a TIL 6 domain in the interval 2971–3020; it reads EECRHSEGRCPWICQDLGAGVACTAQCQPGCHCPAGLLLQNGTCVPPSHC. Asn-3011, Asn-3042, and Asn-3065 each carry an N-linked (GlcNAc...) asparagine glycan. One can recognise a VWFC 5 domain in the interval 3020–3077; it reads CLCHHRGHLYQPGDINALDTCNNCTCVTGQMVCSTETCPVPCTWSNWTAWSTCSHSCD. 2 consecutive TSP type-1 domains span residues 3060 to 3115 and 3117 to 3158; these read PCTW…QPCR and VAPW…APCP. 3 disulfide bridges follow: Cys-3061-Cys-3099, Cys-3072-Cys-3076, and Cys-3109-Cys-3114. N-linked (GlcNAc...) asparagine glycosylation is present at Asn-3136. A TIL 7 domain is found at 3165–3217; the sequence is CPPGKQWQACAQGAASCAELSAAPPADGSCHPGCYCPPGALLLNNECVAEAAC. The VWFC 6 domain maps to 3217 to 3275; it reads CPCAVDGVLYQPGDVVPQGCHNCSCIAGRVTNCSQEDCGDVDGPWTPWTPWSECSASCG. Residues Asn-3238 and Asn-3248 are each glycosylated (N-linked (GlcNAc...) asparagine). A TSP type-1 11 domain is found at 3258 to 3309; it reads DGPWTPWTPWSECSASCGPGRQRRYRFCSAHPGVPCAEPQPQERPCARQPCH. Disulfide bonds link Cys-3270–Cys-3303, Cys-3274–Cys-3308, and Cys-3285–Cys-3293. Asn-3350, Asn-3366, and Asn-3392 each carry an N-linked (GlcNAc...) asparagine glycan. TSP type-1 domains lie at 3410–3475 and 3477–3532; these read PGAW…PPCP and DGAW…SSCP. Cystine bridges form between Cys-3422/Cys-3468, Cys-3426/Cys-3474, Cys-3437/Cys-3449, Cys-3489/Cys-3524, Cys-3492/Cys-3531, and Cys-3502/Cys-3514. The TIL 8 domain maps to 3534–3589; sequence CAGGLVAFTCGKPCPHSCEDLREDTACMATPRCLPACACPHGQLLQDGDCVPPELC. 2 N-linked (GlcNAc...) asparagine glycosylation sites follow: Asn-3598 and Asn-3625. TSP type-1 domains follow at residues 3644 to 3700 and 3702 to 3751; these read DGGW…EGCP and EEPW…HVCR. 6 disulfides stabilise this stretch: Cys-3656-Cys-3693, Cys-3660-Cys-3699, Cys-3671-Cys-3683, Cys-3714-Cys-3745, Cys-3718-Cys-3750, and Cys-3729-Cys-3735. N-linked (GlcNAc...) asparagine glycosylation is found at Asn-3823 and Asn-3869. TSP type-1 domains lie at 3878 to 3934, 3951 to 4004, 4018 to 4074, and 4076 to 4131; these read DGGF…PECP, EEGF…PLCS, NCSW…QACK, and DGAW…QPCD. 6 cysteine pairs are disulfide-bonded: Cys-3890–Cys-3928, Cys-3894–Cys-3933, Cys-3906–Cys-3918, Cys-3963–Cys-3998, Cys-3967–Cys-4003, and Cys-3982–Cys-3988. The interval 3932–3951 is disordered; sequence ECPAVPTTEPGPGVAGAEEE. Asn-4018 carries an N-linked (GlcNAc...) asparagine glycan. 6 disulfide bridges follow: Cys-4019-Cys-4055, Cys-4030-Cys-4034, Cys-4068-Cys-4073, Cys-4088-Cys-4125, Cys-4092-Cys-4130, and Cys-4103-Cys-4115. A TIL 9 domain is found at 4134–4189; the sequence is CPPGMALVTCANHCPRHCGDLQEGIVCREEEHCEPGCRCPNGTLEQDGGCVPLAHC. N-linked (GlcNAc...) asparagine glycans are attached at residues Asn-4174 and Asn-4211. TSP type-1 domains follow at residues 4230–4282, 4322–4384, and 4386–4433; these read RCPW…GPCP, GAEH…RPCP, and ECSW…SGCS. Cystine bridges form between Cys-4231–Cys-4266, Cys-4242–Cys-4246, and Cys-4276–Cys-4281. An N-linked (GlcNAc...) asparagine glycan is attached at Asn-4362. Intrachain disulfides connect Cys-4387–Cys-4417, Cys-4398–Cys-4400, and Cys-4427–Cys-4432. Asn-4428 is a glycosylation site (N-linked (GlcNAc...) asparagine). In terms of domain architecture, TIL 10 spans 4437–4492; it reads CEPPFEFQPCSPPCARLCSTLQHPELCPAQSHCLPGCFCPQGLLEQRSACVPPEQC. Residue Asn-4498 is glycosylated (N-linked (GlcNAc...) asparagine). TSP type-1 domains lie at 4537-4608 and 4610-4662; these read LPLS…DICQ and LCLW…AVCP. Intrachain disulfides connect Cys-4548-Cys-4601, Cys-4551-Cys-4607, Cys-4575-Cys-4591, Cys-4611-Cys-4646, Cys-4622-Cys-4626, and Cys-4656-Cys-4661. Residues 4675–4722 enclose the TIL 11 domain; the sequence is TTCANSCPRACADLWQHVECVQGGCKPGCRCPQGQLLQDGLCVPTAQC. N-linked (GlcNAc...) asparagine glycosylation is found at Asn-4730, Asn-4747, and Asn-4752. TSP type-1 domains are found at residues 4762–4815 and 4817–4869; these read CPSY…QPCP and GCQL…HNCT. 6 cysteine pairs are disulfide-bonded: Cys-4774–Cys-4809, Cys-4778–Cys-4814, Cys-4789–Cys-4798, Cys-4818–Cys-4852, Cys-4829–Cys-4833, and Cys-4863–Cys-4868. Asn-4867 carries an N-linked (GlcNAc...) asparagine glycan. Residues 4872-4926 enclose the TIL 12 domain; sequence CPRSQVHRECANACPHACADLRPQTQCLPQPCQPGCACPPGQVLQDGACVPPEEC. N-linked (GlcNAc...) asparagine glycans are attached at residues Asn-4939 and Asn-4970. A TSP type-1 27 domain is found at 4979 to 5033; sequence DCLWSPWSPWSPCSVTCGMGERLSHRHPLRQRLYEGAECLGPPVRRAACHLPDCA. Intrachain disulfides connect Cys-4980–Cys-5017, Cys-4991–Cys-4995, and Cys-5027–Cys-5032. N-linked (GlcNAc...) asparagine glycans are attached at residues Asn-5081, Asn-5122, and Asn-5169. A VWFC 7 domain is found at 5092 to 5150; the sequence is CECLHQGQLHQPGSEWQEQCARCRCVDGKANCTDGCTPLSCPEGEVKVREPGRCCPVCR. 4 disulfides stabilise this stretch: Cys-5161-Cys-5209, Cys-5175-Cys-5226, Cys-5185-Cys-5242, and Cys-5189-Cys-5244. Residues 5161–5248 enclose the CTCK domain; that stretch reads CRRFTELRNI…IHSCECSSCQ (88 aa).

This sequence belongs to the thrombospondin family.

The protein localises to the secreted. The protein resides in the extracellular space. Involved in the modulation of neuronal aggregation. May be involved in developmental events during the formation of the central nervous system. The sequence is that of SCO-spondin (SSPO) from Gallus gallus (Chicken).